A 296-amino-acid chain; its full sequence is Cytidine deaminase (296 aa).

2 consecutive CMP/dCMP-type deaminase domains span residues 47–167 (TESE…FGPK) and 186–296 (DSSD…VDPI). Substrate is bound at residue 88–90 (NLE). Position 101 (H101) interacts with Zn(2+). Catalysis depends on E103, which acts as the Proton donor. Zn(2+)-binding residues include C128 and C131.

Belongs to the cytidine and deoxycytidylate deaminase family. As to quaternary structure, homodimer. Requires Zn(2+) as cofactor.

It carries out the reaction cytidine + H2O + H(+) = uridine + NH4(+). The enzyme catalyses 2'-deoxycytidine + H2O + H(+) = 2'-deoxyuridine + NH4(+). Its function is as follows. This enzyme scavenges exogenous and endogenous cytidine and 2'-deoxycytidine for UMP synthesis. In Shewanella oneidensis (strain ATCC 700550 / JCM 31522 / CIP 106686 / LMG 19005 / NCIMB 14063 / MR-1), this protein is Cytidine deaminase.